Reading from the N-terminus, the 276-residue chain is Small ribosomal subunit protein uS2 (276 aa).

The disordered stretch occupies residues 254–276 (LAGATAAAPAEGAVATETTPTEG). Over residues 255–276 (AGATAAAPAEGAVATETTPTEG) the composition is skewed to low complexity.

This sequence belongs to the universal ribosomal protein uS2 family.

The sequence is that of Small ribosomal subunit protein uS2 from Mycobacterium ulcerans (strain Agy99).